We begin with the raw amino-acid sequence, 487 residues long: Cell wall protein TIR4 (487 aa).

Positions 1-22 (MAYSKITLLAALAAIAYAQTQA) are cleaved as a signal peptide. A run of 11 repeats spans residues 137–148 (SSSVAPSSSEVV), 149–160 (SSSVAPSSSEVV), 161–172 (SSSVAPSSSEVV), 173–184 (SSSVASSSSEVA), 185–196 (SSSVAPSSSEVV), 197–208 (SSSVASSSSEVA), 209–220 (SSSVAPSSSEVV), 221–232 (SSSVAPSSSEVV), 233–244 (SSSVASSSSEVA), 245–256 (SSSVAPSSSEVV), and 257–268 (SSSVASSTSEAT). Residues 137-268 (SSSVAPSSSE…SVASSTSEAT (132 aa)) form an 11 X 12 AA approximate tandem repeats, Ser-rich region. Residues 206–299 (EVASSSVAPS…SVSSSSAVSS (94 aa)) form a disordered region. N-linked (GlcNAc...) asparagine glycosylation is found at Asn327, Asn348, Asn368, Asn403, and Asn404. Asn465 carries the GPI-anchor amidated asparagine lipid modification. The propeptide at 466–487 (GAAKAVIGMGAGALAAVAAMLL) is removed in mature form.

This sequence belongs to the SRP1/TIP1 family. The GPI-anchor is attached to the protein in the endoplasmic reticulum and serves to target the protein to the cell surface. There, the glucosamine-inositol phospholipid moiety is cleaved off and the GPI-modified mannoprotein is covalently attached via its lipidless GPI glycan remnant to the 1,6-beta-glucan of the outer cell wall layer.

It is found in the secreted. The protein resides in the cell wall. The protein localises to the membrane. Functionally, component of the cell wall. Required for anaerobic growth. The sequence is that of Cell wall protein TIR4 (TIR4) from Saccharomyces cerevisiae (strain ATCC 204508 / S288c) (Baker's yeast).